Consider the following 305-residue polypeptide: tRNA N6-adenosine threonylcarbamoyltransferase (305 aa).

Fe cation is bound by residues H108 and H112. Residues 130–134 (VVSGG), D163, G176, D180, and N264 contribute to the substrate site. Residue D288 coordinates Fe cation.

The protein belongs to the KAE1 / TsaD family. The cofactor is Fe(2+).

It is found in the cytoplasm. The catalysed reaction is L-threonylcarbamoyladenylate + adenosine(37) in tRNA = N(6)-L-threonylcarbamoyladenosine(37) in tRNA + AMP + H(+). Its function is as follows. Required for the formation of a threonylcarbamoyl group on adenosine at position 37 (t(6)A37) in tRNAs that read codons beginning with adenine. Is involved in the transfer of the threonylcarbamoyl moiety of threonylcarbamoyl-AMP (TC-AMP) to the N6 group of A37, together with TsaE and TsaB. TsaD likely plays a direct catalytic role in this reaction. This chain is tRNA N6-adenosine threonylcarbamoyltransferase, found in Mycoplasma mobile (strain ATCC 43663 / 163K / NCTC 11711) (Mesomycoplasma mobile).